The chain runs to 87 residues: LYR motif-containing protein 2 (87 aa).

A mitochondrion-targeting transit peptide spans 1–19; sequence MGSRLPPAALTLKQFLVRQ.

It belongs to the complex I LYR family.

The protein localises to the mitochondrion. Its function is as follows. Involved in efficient integration of the N-module into mitochondrial respiratory chain complex I. The protein is LYR motif-containing protein 2 (lyrm2) of Xenopus tropicalis (Western clawed frog).